The sequence spans 311 residues: Heme A synthase (311 aa).

At 1 to 6 (MQRFIK) the chain is on the cytoplasmic side. The chain crosses the membrane as a helical span at residues 7-27 (WLAVITSLDLLIVLLGGALVT). Over 28–62 (KTGSGQGCGKSWPLCNGEFVPSNLSMETIIELSHR) the chain is Extracellular. A disulfide bridge links Cys35 with Cys42. Glu58 is a catalytic residue. Residue His61 participates in heme o binding. The chain crosses the membrane as a helical span at residues 63 to 83 (LTSGSAGILVTLLCILSWKYY). Residues 84–91 (KHVRETKT) are Cytoplasmic-facing. Residues 92 to 112 (LAILSFVFLVAQALMGAAAVV) traverse the membrane as a helical segment. Residues 113–121 (WGQMPAVLA) lie on the Extracellular side of the membrane. A helical transmembrane segment spans residues 122 to 142 (IHFGISLISFASVILLTCLIF). His123 contacts heme o. The Cytoplasmic portion of the chain corresponds to 143 to 159 (EIDQKFDARSLIMDKKM). A helical transmembrane segment spans residues 160 to 180 (KFHIYGVTIYSYIVVYTGALV). Residues 181-211 (RHERASLACPDFPLCSKNRPMPTQLHEWVQM) are Extracellular-facing. Cys189 and Cys195 are joined by a disulfide. Residues 212–232 (GHRVAAMLIFAWILYAMILAI) traverse the membrane as a helical segment. His213 is a heme b binding site. Over 233–243 (RHYKQQPVVYW) the chain is Cytoplasmic. The chain crosses the membrane as a helical span at residues 244 to 264 (GWIISFILVTLQAIVGILVVF). Residues 265 to 271 (TNASLSM) lie on the Extracellular side of the membrane. The chain crosses the membrane as a helical span at residues 272–292 (ALLHSLFISCLFAVLCYLVML). A heme b-binding site is contributed by His275. The Cytoplasmic segment spans residues 293–311 (GTRSKVNAKEAASTSKQTK).

This sequence belongs to the COX15/CtaA family. Type 1 subfamily. As to quaternary structure, interacts with CtaB. Requires heme b as cofactor.

It is found in the cell membrane. It carries out the reaction Fe(II)-heme o + 2 A + H2O = Fe(II)-heme a + 2 AH2. Its pathway is porphyrin-containing compound metabolism; heme A biosynthesis; heme A from heme O: step 1/1. Its function is as follows. Catalyzes the conversion of heme O to heme A by two successive hydroxylations of the methyl group at C8. The first hydroxylation forms heme I, the second hydroxylation results in an unstable dihydroxymethyl group, which spontaneously dehydrates, resulting in the formyl group of heme A. The polypeptide is Heme A synthase (Bacillus cereus (strain ATCC 10987 / NRS 248)).